A 95-amino-acid chain; its full sequence is Aspartyl/glutamyl-tRNA(Asn/Gln) amidotransferase subunit C (95 aa).

Belongs to the GatC family. As to quaternary structure, heterotrimer of A, B and C subunits.

It catalyses the reaction L-glutamyl-tRNA(Gln) + L-glutamine + ATP + H2O = L-glutaminyl-tRNA(Gln) + L-glutamate + ADP + phosphate + H(+). The catalysed reaction is L-aspartyl-tRNA(Asn) + L-glutamine + ATP + H2O = L-asparaginyl-tRNA(Asn) + L-glutamate + ADP + phosphate + 2 H(+). In terms of biological role, allows the formation of correctly charged Asn-tRNA(Asn) or Gln-tRNA(Gln) through the transamidation of misacylated Asp-tRNA(Asn) or Glu-tRNA(Gln) in organisms which lack either or both of asparaginyl-tRNA or glutaminyl-tRNA synthetases. The reaction takes place in the presence of glutamine and ATP through an activated phospho-Asp-tRNA(Asn) or phospho-Glu-tRNA(Gln). This Pseudomonas putida (strain W619) protein is Aspartyl/glutamyl-tRNA(Asn/Gln) amidotransferase subunit C.